We begin with the raw amino-acid sequence, 110 residues long: UPF0122 protein lwe1821 (110 aa).

The protein belongs to the UPF0122 family.

Functionally, might take part in the signal recognition particle (SRP) pathway. This is inferred from the conservation of its genetic proximity to ftsY/ffh. May be a regulatory protein. The chain is UPF0122 protein lwe1821 from Listeria welshimeri serovar 6b (strain ATCC 35897 / DSM 20650 / CCUG 15529 / CIP 8149 / NCTC 11857 / SLCC 5334 / V8).